Here is a 568-residue protein sequence, read N- to C-terminus: Oxygen-dependent choline dehydrogenase (568 aa).

8 to 37 contributes to the FAD binding site; that stretch reads DYIIIGAGSAGNTLAARLTEDAGVTVLLLE. His-477 (proton acceptor) is an active-site residue.

This sequence belongs to the GMC oxidoreductase family. FAD is required as a cofactor.

It carries out the reaction choline + A = betaine aldehyde + AH2. The catalysed reaction is betaine aldehyde + NAD(+) + H2O = glycine betaine + NADH + 2 H(+). Its pathway is amine and polyamine biosynthesis; betaine biosynthesis via choline pathway; betaine aldehyde from choline (cytochrome c reductase route): step 1/1. In terms of biological role, involved in the biosynthesis of the osmoprotectant glycine betaine. Catalyzes the oxidation of choline to betaine aldehyde and betaine aldehyde to glycine betaine at the same rate. This chain is Oxygen-dependent choline dehydrogenase, found in Pseudomonas savastanoi pv. phaseolicola (strain 1448A / Race 6) (Pseudomonas syringae pv. phaseolicola (strain 1448A / Race 6)).